The sequence spans 1522 residues: Sodium channel protein 1 brain (1522 aa).

The Cytoplasmic portion of the chain corresponds to 1–50; sequence MDEKYTAKNRDKTFVVIEKRFKKNIIHRFSAKRSLFLFTPRNPIRRLAVC. The I repeat unit spans residues 41-342; it reads RNPIRRLAVC…VATAYELEVK (302 aa). Residues 51–70 form a helical membrane-spanning segment; it reads IATNVCFDYFLMFTIMINCV. Residues 71 to 77 are Extracellular-facing; sequence FLAMPDI. Residues 78–99 form a helical membrane-spanning segment; that stretch reads SEFAEYIFLGIYTMEMAIKLVA. Residues 100–112 are Cytoplasmic-facing; it reads GGFFIDKYTYLRD. Residues 113 to 134 form a helical membrane-spanning segment; it reads AWNCLDFTVIMISYITLLLQTI. Residues 135 to 143 lie on the Extracellular side of the membrane; it reads NDKVISDIT. Residues 144 to 167 form a helical; Voltage-sensor membrane-spanning segment; that stretch reads GLRTFRVLRALRTLSIIPGLKTMV. Residues 168-179 are Cytoplasmic-facing; the sequence is NALLRALRMLIS. The chain crosses the membrane as a helical span at residues 180 to 201; that stretch reads VLILILFCLWIFSQAGVQLFGG. The Extracellular segment spans residues 202-278; that stretch reads ALRHKCVLQI…PNYGYTNFDS (77 aa). An intrachain disulfide couples C207 to C255. Residues N248 and N258 are each glycosylated (N-linked (GlcNAc...) asparagine). The segment at residues 279–303 is an intramembrane region (pore-forming); that stretch reads IGWSMLISFQLLTQDYWEDVYNKVI. At 304 to 308 the chain is on the extracellular side; sequence RAHSP. Residues 309–331 form a helical membrane-spanning segment; that stretch reads WTVIYFIVINFFGSLYLMNLMLA. Residues 332–406 are Cytoplasmic-facing; the sequence is VVATAYELEV…WLRVQSFAHC (75 aa). The II repeat unit spans residues 393 to 647; it reads CYNPWLRVQS…EQEVEVSSFA (255 aa). A helical transmembrane segment spans residues 407-426; the sequence is IITDSFTEVFIIFIIVLNTV. Residues 427-442 lie on the Extracellular side of the membrane; that stretch reads FLAMEHHGMSMELKNV. Residues 443 to 464 traverse the membrane as a helical segment; the sequence is LKVANYVFTTVFVLEAILKLLA. Topologically, residues 465–472 are cytoplasmic; it reads FNKQYFKS. A helical membrane pass occupies residues 473 to 491; the sequence is GWNICDLVVVVASLIDLGV. Over 492 to 498 the chain is Extracellular; sequence EGLKGVS. The chain crosses the membrane as a helical; Voltage-sensor span at residues 499-522; the sequence is VFRSFRLLRVFHLAQSWTTMRLLL. Residues 523 to 531 are Cytoplasmic-facing; sequence CIILNTLGS. A helical transmembrane segment spans residues 532 to 553; sequence LGYLTIILIIVIYIFAVTGLQL. Over 554–575 the chain is Extracellular; the sequence is FHTEYTPDKFRGEPVPRWNFND. An intramembrane region (pore-forming) is located at residues 576–596; that stretch reads FLHSFMMVFRILCGEWIEPMY. Residues 597–607 lie on the Extracellular side of the membrane; the sequence is DCMRACNGLCF. An intrachain disulfide couples C598 to C606. Residues 608–628 form a helical membrane-spanning segment; that stretch reads LIFIPVTVFGKTLFFLFIGLV. The Cytoplasmic portion of the chain corresponds to 629-777; that stretch reads LGAFGSDTVE…WNNFRRQLMM (149 aa). The III repeat unit spans residues 770–1074; sequence NFRRQLMMVC…QNYYNTLKKL (305 aa). Residues 778–797 traverse the membrane as a helical segment; that stretch reads VCENKYFETGVLVIIFASSI. At 798-815 the chain is on the extracellular side; it reads LLAFEDIYLNEKPRLKLA. The helical transmembrane segment at 816 to 837 threads the bilayer; sequence IFYLDITFCLLFFLEMVLKLVA. The Cytoplasmic portion of the chain corresponds to 838–846; the sequence is LGFVHYYTH. The helical transmembrane segment at 847–868 threads the bilayer; it reads FWTILDFTIVIITVISLAASGL. Over 869 to 874 the chain is Extracellular; sequence GMEQIT. Residues 875–898 traverse the membrane as a helical; Voltage-sensor segment; that stretch reads AFRSLRTLRALRPLRAVSRWQGMK. Residues 899-915 lie on the Cytoplasmic side of the membrane; it reads IIVNALMLSIPSIFNVL. Residues 916–937 form a helical membrane-spanning segment; sequence LVCVVFWLIFAIMGVQLFAGKF. Topologically, residues 938-976 are extracellular; that stretch reads YKCVNETNMRIPPTEVANKIECYNKNYTWVNSNVNFDNV. N-linked (GlcNAc...) asparagine glycosylation is found at N942 and N963. Positions 977–998 form an intramembrane region, pore-forming; sequence GGAFLALFQVATFEGWMEIMAD. At 999–1009 the chain is on the extracellular side; that stretch reads AVDVTEVDEQP. A helical membrane pass occupies residues 1010–1022; the sequence is KFEATVYYYFYFV. Over 1023-1100 the chain is Cytoplasmic; it reads LFIIFGSFFV…QAVVYDLVMS (78 aa). Phosphothreonine; by PKC is present on T1076. The stretch at 1083–1386 is one IV repeat; the sequence is VKRPKNKCQA…WEQYDPLATQ (304 aa). The helical transmembrane segment at 1101–1120 threads the bilayer; sequence NQFEIFITTIIITNMIFMAF. Residues 1121–1132 lie on the Extracellular side of the membrane; that stretch reads EHYNQSEVVTEV. N-linked (GlcNAc...) asparagine glycosylation is present at N1124. Residues 1133 to 1154 form a helical membrane-spanning segment; that stretch reads LATANIAFTILYAVEAIIKIIG. The Cytoplasmic portion of the chain corresponds to 1155 to 1162; sequence LRIHYLRN. The chain crosses the membrane as a helical span at residues 1163–1184; it reads LWNVFDFLVVTLSVMDAFLNDI. The Extracellular segment spans residues 1185–1194; it reads FGDGIFMNPS. The helical; Voltage-sensor transmembrane segment at 1195 to 1218 threads the bilayer; the sequence is LLRVARMFRIGRIIRLIKWAKGMR. The Cytoplasmic segment spans residues 1219–1236; it reads KLLFALVISLPALFNIGA. A helical membrane pass occupies residues 1237 to 1258; it reads LLMLVMFIYTIIGMSSFGQIKL. The Extracellular segment spans residues 1259-1270; the sequence is SGALNDQVNFQT. Residues 1271-1293 constitute an intramembrane region (pore-forming); that stretch reads FGKTFLLLVRLATSAGWNDILGP. At 1294-1323 the chain is on the extracellular side; the sequence is LLIQPPNCDPNYITTSTGEKIKVVNGDCGM. Residues 1324 to 1346 traverse the membrane as a helical segment; sequence PWLAISYMVSYIIIVFMIVFNMY. Residues 1347-1522 are Cytoplasmic-facing; the sequence is IAVILENFNQ…FIISAPETAV (176 aa).

This sequence belongs to the sodium channel (TC 1.A.1.10) family.

Its subcellular location is the cell membrane. Functionally, mediates the voltage-dependent sodium ion permeability of excitable membranes. Assuming opened or closed conformations in response to the voltage difference across the membrane, the protein forms a sodium-selective channel through which Na(+) ions may pass in accordance with their electrochemical gradient. The protein is Sodium channel protein 1 brain of Heterololigo bleekeri (Spear squid).